The primary structure comprises 1269 residues: Histone-lysine N-methyltransferase SETDB1 (1269 aa).

Residues 9 to 63 are a coiled coil; sequence KELGISMDDLRELIDRELEKIEFVKQRKAQLLEMEQLVKQKEAEVDHVDKLFDNA. Disordered regions lie at residues 85 to 121 and 153 to 188; these read YKES…GEAV and QKKS…DMSK. Residues 103–112 are compositionally biased toward acidic residues; it reads EIPDEDDDDV. Residues 164 to 177 are compositionally biased toward low complexity; it reads SSHPSSPTSSVGGS. 2 consecutive Tudor domains span residues 250–312 and 340–395; these read ENLT…RPWS and VLLK…MFSM. Polar residues predominate over residues 396–414; that stretch reads KTSNASTQEKQQAGQQRTR. The disordered stretch occupies residues 396–516; that stretch reads KTSNASTQEK…FQSNQSVQPV (121 aa). The span at 462-476 shows a compositional bias: low complexity; it reads DSQQAQSKKQVAKKS. The segment covering 486 to 497 has biased composition (polar residues); sequence SGQSSPIPTESV. Positions 620–691 constitute an MBD domain; sequence HRGKNPLLVP…EMFCLDPYVL (72 aa). A Pre-SET domain is found at 753–826; that stretch reads VGCDCTDGCR…MCNNRLVQHG (74 aa). The Zn(2+) site is built by Cys-755, Cys-757, Cys-761, Cys-767, Cys-769, Cys-807, Cys-811, Cys-813, and Cys-818. An SET domain is found at 829–1244; the sequence is VRLQLFKTQN…AGTELTWDYN (416 aa). S-adenosyl-L-methionine contacts are provided by residues 839 to 841, Asp-877, and Tyr-879; that span reads KGW. Positions 894-1139 are disordered; the sequence is EGYESDAKSS…VAASAGPVKR (246 aa). Acidic residues predominate over residues 919-932; the sequence is SGSEDQEESNDSSD. Basic and acidic residues-rich tracts occupy residues 968-989 and 1021-1033; these read ASKD…ETSK and ETDK…EASK. A compositionally biased stretch (low complexity) spans 1078 to 1094; sequence TEEVLTLSSSSDSEVGS. The span at 1106-1120 shows a compositional bias: polar residues; the sequence is ATANDSDDIQTISSG. S-adenosyl-L-methionine contacts are provided by residues Arg-1198 and 1201-1202; that span reads NH. Zn(2+) is bound by residues Cys-1204, Cys-1257, Cys-1259, and Cys-1264. A Post-SET domain is found at 1253 to 1269; it reads KKLLCCCGSTECRGRLL.

It belongs to the class V-like SAM-binding methyltransferase superfamily. Histone-lysine methyltransferase family. Suvar3-9 subfamily.

Its subcellular location is the nucleus. It is found in the chromosome. The catalysed reaction is N(6),N(6)-dimethyl-L-lysyl(9)-[histone H3] + S-adenosyl-L-methionine = N(6),N(6),N(6)-trimethyl-L-lysyl(9)-[histone H3] + S-adenosyl-L-homocysteine + H(+). Its function is as follows. Histone methyltransferase that specifically trimethylates 'Lys-9' of histone H3. H3 'Lys-9' trimethylation represents a specific tag for epigenetic transcriptional repression by recruiting HP1 (CBX1, CBX3 and/or CBX5) proteins to methylated histones. Mainly functions in euchromatin regions, thereby playing a central role in the silencing of euchromatic genes. H3 'Lys-9' trimethylation is coordinated with DNA methylation. Plays a role in promoter hypermethylation and transcriptional silencing of tumor suppressor genes (TSGs) or other tumor-related genes. Also required to maintain a transcriptionally repressive state of genes in undifferentiated embryonic stem cells (ESCs). Associates at promoter regions of tumor suppressor genes (TSGs) leading to their gene silencing. The sequence is that of Histone-lysine N-methyltransferase SETDB1 (setdb1) from Xenopus laevis (African clawed frog).